Reading from the N-terminus, the 138-residue chain is Large ribosomal subunit protein uL16 (138 aa).

The span at 1–17 (MLIPRKVKHRKQHHPKQ) shows a compositional bias: basic residues. The interval 1–24 (MLIPRKVKHRKQHHPKQRGIASGG) is disordered.

This sequence belongs to the universal ribosomal protein uL16 family. As to quaternary structure, part of the 50S ribosomal subunit.

Functionally, binds 23S rRNA and is also seen to make contacts with the A and possibly P site tRNAs. The protein is Large ribosomal subunit protein uL16 of Mycolicibacterium vanbaalenii (strain DSM 7251 / JCM 13017 / BCRC 16820 / KCTC 9966 / NRRL B-24157 / PYR-1) (Mycobacterium vanbaalenii).